The sequence spans 608 residues: MQFQTEVNQLLQLMIHSLYSNKEIFLRELISNASDALDKLNFLSVSDDKYKSLKFEPKIEIKIDKDKKTLSISDNGIGMDKDDLINNLGTIAKSGTKSFLENLSGDAKKDSQLIGQFGVGFYSAFMVASKIEVLSKKALDDKAYLWSSDANGYEIDDANKEEQGTSITLYLKDDEFANAYKIESIIEKYSNHIQFPIFMEKEEFTPAKEGEEEGKTELKISQINKANALWRMQKSSLKAEDYERFYEQNFHDSNKPLLYLHTKSEGKLEYNSLFFIPQNAPFDLFRVDYQSGLKLYVKRVFISDDDKELLPTYLRFVRGIIDVEDLPLNVSREILQENQILKGIKEASVKKILGELEKLKNNDKEKYLSFFKTFGKVLKEGLYGFGGEKDSLLKLMLYKSTKGENLRSLEEYKNDLQGEQKEIFYIAGNNESLLRTSPLLEEYKQKNIEVLLMDDEIDSLVTPMLEFEGLKFVSINQVEDKNELSDEEKNTFAPLVAKFKELLKDQVEDVRLTSRLKDSPSCIVYDKNKPDFAMQQLLKQMGQEQNFKPILEINPKHAIFTGLKNNESFSADIATLVLNMAKLSEGMGVDNPAEFNASLTKIINKAFS.

Residues 1–332 (MQFQTEVNQL…VEDLPLNVSR (332 aa)) are a; substrate-binding. The segment at 333-536 (EILQENQILK…KNKPDFAMQQ (204 aa)) is b. The tract at residues 537 to 608 (LLKQMGQEQN…LTKIINKAFS (72 aa)) is c.

The protein belongs to the heat shock protein 90 family. Homodimer.

It is found in the cytoplasm. In terms of biological role, molecular chaperone. Has ATPase activity. The protein is Chaperone protein HtpG of Campylobacter jejuni subsp. jejuni serotype O:2 (strain ATCC 700819 / NCTC 11168).